Here is a 399-residue protein sequence, read N- to C-terminus: MGVFRFISISLAAVSAANAAQILSMPHAQTVPNSYIVMMKDDTSDDDFNHHQSWLQSTHTHNITRRATIQNAGMRHKYNFSKMKGYSGIFDEETIKDIAKDPKVMFVEPDTIISVHGKVEQSNVPSWGLARISNPQPGAGSYIYDSSAGEGITVYSVDTGVDVNHEDFEGRAIWGSNQVNDGDDRDGSGHGTHTSGTMVGKEFGIAKKAKLVAVKVLGNDGSGPTSGIVAGINWSVEHARQNGGTKKAVMNMSLGGSSSSALNRAAAQAVEQGMFLSVAAGNDNQDAQSSSPASEPSVCTVGSSAEDDSRSSFSNWGPAIDLFAPGSNIISARPGGGSQSMSGTSMAAPHVAGLAAYLMALEGISGGAVCDRLKELGTSSITDAGPGTPTNVLINNGGA.

A signal peptide spans 1 to 19 (MGVFRFISISLAAVSAANA). The propeptide occupies 20–116 (AQILSMPHAQ…VEPDTIISVH (97 aa)). One can recognise an Inhibitor I9 domain in the interval 34-115 (SYIVMMKDDT…FVEPDTIISV (82 aa)). Positions 126–399 (SWGLARISNP…TNVLINNGGA (274 aa)) constitute a Peptidase S8 domain. Active-site charge relay system residues include aspartate 158 and histidine 190. Residues 175–198 (GSNQVNDGDDRDGSGHGTHTSGTM) are disordered. The N-linked (GlcNAc...) asparagine glycan is linked to asparagine 251. Polar residues predominate over residues 282–294 (NDNQDAQSSSPAS). A disordered region spans residues 282-312 (NDNQDAQSSSPASEPSVCTVGSSAEDDSRSS). The Charge relay system role is filled by serine 345.

Belongs to the peptidase S8 family.

It is found in the secreted. Secreted subtilisin-like serine protease with keratinolytic activity that contributes to pathogenicity. The chain is Subtilisin-like protease 1 (SUB1) from Arthroderma benhamiae (Trichophyton mentagrophytes).